The sequence spans 409 residues: Probable peptidoglycan glycosyltransferase FtsW (409 aa).

9 helical membrane passes run 42-62 (LFTL…SASL), 72-92 (PFHF…VMLA), 108-128 (LLLL…EVNG), 135-155 (VGPI…IYMA), 178-198 (LLFI…VVVL), 213-233 (LWQF…LIIV), 303-323 (FLGV…ALII), 337-357 (YLAY…IGVA), and 368-388 (LPLV…VGLL).

This sequence belongs to the SEDS family. FtsW subfamily.

Its subcellular location is the cell inner membrane. It carries out the reaction [GlcNAc-(1-&gt;4)-Mur2Ac(oyl-L-Ala-gamma-D-Glu-L-Lys-D-Ala-D-Ala)](n)-di-trans,octa-cis-undecaprenyl diphosphate + beta-D-GlcNAc-(1-&gt;4)-Mur2Ac(oyl-L-Ala-gamma-D-Glu-L-Lys-D-Ala-D-Ala)-di-trans,octa-cis-undecaprenyl diphosphate = [GlcNAc-(1-&gt;4)-Mur2Ac(oyl-L-Ala-gamma-D-Glu-L-Lys-D-Ala-D-Ala)](n+1)-di-trans,octa-cis-undecaprenyl diphosphate + di-trans,octa-cis-undecaprenyl diphosphate + H(+). The protein operates within cell wall biogenesis; peptidoglycan biosynthesis. Peptidoglycan polymerase that is essential for cell division. This is Probable peptidoglycan glycosyltransferase FtsW from Idiomarina loihiensis (strain ATCC BAA-735 / DSM 15497 / L2-TR).